The sequence spans 235 residues: 1-(5-phosphoribosyl)-5-[(5-phosphoribosylamino)methylideneamino] imidazole-4-carboxamide isomerase (235 aa).

Residue D8 is the Proton acceptor of the active site. D129 functions as the Proton donor in the catalytic mechanism.

This sequence belongs to the HisA/HisF family.

The protein localises to the cytoplasm. The enzyme catalyses 1-(5-phospho-beta-D-ribosyl)-5-[(5-phospho-beta-D-ribosylamino)methylideneamino]imidazole-4-carboxamide = 5-[(5-phospho-1-deoxy-D-ribulos-1-ylimino)methylamino]-1-(5-phospho-beta-D-ribosyl)imidazole-4-carboxamide. It functions in the pathway amino-acid biosynthesis; L-histidine biosynthesis; L-histidine from 5-phospho-alpha-D-ribose 1-diphosphate: step 4/9. This is 1-(5-phosphoribosyl)-5-[(5-phosphoribosylamino)methylideneamino] imidazole-4-carboxamide isomerase from Thermoanaerobacter sp. (strain X514).